We begin with the raw amino-acid sequence, 317 residues long: Beta-ketoacyl-[acyl-carrier-protein] synthase III (317 aa).

Catalysis depends on residues C112 and H244. The interval 245 to 249 (QANLR) is ACP-binding. N274 is a catalytic residue.

The protein belongs to the thiolase-like superfamily. FabH family. As to quaternary structure, homodimer.

It is found in the cytoplasm. It catalyses the reaction malonyl-[ACP] + acetyl-CoA + H(+) = 3-oxobutanoyl-[ACP] + CO2 + CoA. It participates in lipid metabolism; fatty acid biosynthesis. Catalyzes the condensation reaction of fatty acid synthesis by the addition to an acyl acceptor of two carbons from malonyl-ACP. Catalyzes the first condensation reaction which initiates fatty acid synthesis and may therefore play a role in governing the total rate of fatty acid production. Possesses both acetoacetyl-ACP synthase and acetyl transacylase activities. Its substrate specificity determines the biosynthesis of branched-chain and/or straight-chain of fatty acids. The protein is Beta-ketoacyl-[acyl-carrier-protein] synthase III of Pectobacterium atrosepticum (strain SCRI 1043 / ATCC BAA-672) (Erwinia carotovora subsp. atroseptica).